A 417-amino-acid polypeptide reads, in one-letter code: Serine hydroxymethyltransferase (417 aa).

Residues Leu-120 and 124–126 (GHL) contribute to the (6S)-5,6,7,8-tetrahydrofolate site. The residue at position 229 (Lys-229) is an N6-(pyridoxal phosphate)lysine.

The protein belongs to the SHMT family. As to quaternary structure, homodimer. Pyridoxal 5'-phosphate serves as cofactor.

Its subcellular location is the cytoplasm. It catalyses the reaction (6R)-5,10-methylene-5,6,7,8-tetrahydrofolate + glycine + H2O = (6S)-5,6,7,8-tetrahydrofolate + L-serine. It functions in the pathway one-carbon metabolism; tetrahydrofolate interconversion. The protein operates within amino-acid biosynthesis; glycine biosynthesis; glycine from L-serine: step 1/1. Its function is as follows. Catalyzes the reversible interconversion of serine and glycine with tetrahydrofolate (THF) serving as the one-carbon carrier. This reaction serves as the major source of one-carbon groups required for the biosynthesis of purines, thymidylate, methionine, and other important biomolecules. Also exhibits THF-independent aldolase activity toward beta-hydroxyamino acids, producing glycine and aldehydes, via a retro-aldol mechanism. The sequence is that of Serine hydroxymethyltransferase from Anaeromyxobacter sp. (strain Fw109-5).